The sequence spans 266 residues: Short-chain dehydrogenase/reductase tropE (266 aa).

Positions 18, 69, and 96 each coordinate NADP(+). The Proton donor role is filled by Ser-147. NADP(+) is bound by residues Tyr-181, Lys-185, and Thr-216. The active-site Proton acceptor is Tyr-181. The active-site Lowers pKa of active site Tyr is Lys-185.

This sequence belongs to the short-chain dehydrogenases/reductases (SDR) family.

It functions in the pathway secondary metabolite biosynthesis. Short-chain dehydrogenase/reductase; part of the gene cluster that mediates the biosynthesis of the tropolone class of fungal maleic anhydrides. The pathway begins with the synthesis of 3-methylorcinaldehyde by the non-reducing polyketide synthase (PKS) tropA. 3-methylorcinaldehyde is the substrate for the FAD-dependent monooxygenase tropB to yield a dearomatized hydroxycyclohexadione. The 2-oxoglutarate-dependent dioxygenase tropC then performs the oxidative ring expansion to provide the first tropolone metabolite stipitaldehyde. Trop D converts stipitaldehyde into stipitacetal which is in turn converted to stipitalide by the short-chain dehydrogenase/reductase tropE. The next steps involve tropF, tropG, tropH, tropI and tropJ to form successive tropolone maleic anhydrides including stipitaldehydic, stipitatonic and stipitatic acids. The protein is Short-chain dehydrogenase/reductase tropE of Talaromyces stipitatus (strain ATCC 10500 / CBS 375.48 / QM 6759 / NRRL 1006) (Penicillium stipitatum).